The following is a 251-amino-acid chain: DNA repair protein RecO (251 aa).

The protein belongs to the RecO family.

Its function is as follows. Involved in DNA repair and RecF pathway recombination. The polypeptide is DNA repair protein RecO (Albidiferax ferrireducens (strain ATCC BAA-621 / DSM 15236 / T118) (Rhodoferax ferrireducens)).